The primary structure comprises 160 residues: MNLNATILGQTISFVLFVWFCMKYVWYPFISIIEKRQKEISDNLVSATHAKTESERVNAEALLCLRQARVKAQEIIKQANKCKMQIINEAKHEAEKEQSRILSQAREQIIYERKRVTDELRKQISELVIEGTEKVIEHSINEMIDIDLLNNIINTLSYKD.

The chain crosses the membrane as a helical span at residues 12–32 (ISFVLFVWFCMKYVWYPFISI).

It belongs to the ATPase B chain family. As to quaternary structure, F-type ATPases have 2 components, F(1) - the catalytic core - and F(0) - the membrane proton channel. F(1) has five subunits: alpha(3), beta(3), gamma(1), delta(1), epsilon(1). F(0) has three main subunits: a(1), b(2) and c(10-14). The alpha and beta chains form an alternating ring which encloses part of the gamma chain. F(1) is attached to F(0) by a central stalk formed by the gamma and epsilon chains, while a peripheral stalk is formed by the delta and b chains.

It localises to the cell inner membrane. Its function is as follows. F(1)F(0) ATP synthase produces ATP from ADP in the presence of a proton or sodium gradient. F-type ATPases consist of two structural domains, F(1) containing the extramembraneous catalytic core and F(0) containing the membrane proton channel, linked together by a central stalk and a peripheral stalk. During catalysis, ATP synthesis in the catalytic domain of F(1) is coupled via a rotary mechanism of the central stalk subunits to proton translocation. In terms of biological role, component of the F(0) channel, it forms part of the peripheral stalk, linking F(1) to F(0). This Blochmanniella pennsylvanica (strain BPEN) protein is ATP synthase subunit b.